A 297-amino-acid chain; its full sequence is PsbP domain-containing protein 5, chloroplastic (297 aa).

Belongs to the PsbP family.

It is found in the plastid. The protein localises to the chloroplast thylakoid lumen. Its function is as follows. Involved in strigolactone biosynthesis. This Arabidopsis thaliana (Mouse-ear cress) protein is PsbP domain-containing protein 5, chloroplastic (PPD5).